Consider the following 385-residue polypeptide: Chorismate synthase (385 aa).

The segment at 43-63 is disordered; the sequence is PDLDRRRPGTSRHVTQRNEPD. 2 residues coordinate NADP(+): Arg-48 and Arg-54. FMN contacts are provided by residues 125 to 127, 238 to 239, Gly-278, 293 to 297, and Arg-319; these read RSS, NA, and KPTSS. The segment covering 363 to 372 has biased composition (low complexity); the sequence is AQAPRTETAP. The disordered stretch occupies residues 363 to 385; that stretch reads AQAPRTETAPATPPLDAGDDIEA.

This sequence belongs to the chorismate synthase family. As to quaternary structure, homotetramer. FMNH2 is required as a cofactor.

It carries out the reaction 5-O-(1-carboxyvinyl)-3-phosphoshikimate = chorismate + phosphate. It functions in the pathway metabolic intermediate biosynthesis; chorismate biosynthesis; chorismate from D-erythrose 4-phosphate and phosphoenolpyruvate: step 7/7. Functionally, catalyzes the anti-1,4-elimination of the C-3 phosphate and the C-6 proR hydrogen from 5-enolpyruvylshikimate-3-phosphate (EPSP) to yield chorismate, which is the branch point compound that serves as the starting substrate for the three terminal pathways of aromatic amino acid biosynthesis. This reaction introduces a second double bond into the aromatic ring system. This is Chorismate synthase from Leptothrix cholodnii (strain ATCC 51168 / LMG 8142 / SP-6) (Leptothrix discophora (strain SP-6)).